The following is a 352-amino-acid chain: D-alanine--D-alanine ligase A (352 aa).

The ATP-grasp domain maps to 138–341 (KRMVQSAGLV…PPKLVGALVE (204 aa)). Residue 165–220 (ECLGSSTLFVKPATSGSSIGVSRVSNALEYAAAFAIAAREDTKVLVEAAVCGREIE) coordinates ATP. Mg(2+)-binding residues include Asp295, Glu308, and Asn310.

The protein belongs to the D-alanine--D-alanine ligase family. The cofactor is Mg(2+). It depends on Mn(2+) as a cofactor.

The protein resides in the cytoplasm. It carries out the reaction 2 D-alanine + ATP = D-alanyl-D-alanine + ADP + phosphate + H(+). The protein operates within cell wall biogenesis; peptidoglycan biosynthesis. Functionally, cell wall formation. The sequence is that of D-alanine--D-alanine ligase A from Pseudomonas putida (strain ATCC 47054 / DSM 6125 / CFBP 8728 / NCIMB 11950 / KT2440).